The sequence spans 758 residues: GPI ethanolamine phosphate transferase 2 (758 aa).

Residues Asn28, Asn77, and Asn178 are each glycosylated (N-linked (GlcNAc...) asparagine). Helical transmembrane passes span 405-425 (LVAISILGACSILSLILFRNL), 431-451 (LLAFAPFVVQNIIIVFSSSFI), and 455-472 (HVIWYFAAVSLSLLQLLN). N-linked (GlcNAc...) asparagine glycosylation is present at Asn493. The next 6 membrane-spanning stretches (helical) occupy residues 533–553 (PSPINFLSSMFIAFYKLMPII), 561–581 (PIIASFDYTFFVRIIWSLLLI), 598–618 (LFILLLTRLENMGLYLLYDIW), 667–687 (IFAVGILLFTSVFAGALWWCL), 698–718 (VKTFWIMSSISLTFLCISCFI), and 733–753 (LLYNASWASMYFLAKCLISTI).

It belongs to the PIGG/PIGN/PIGO family. PIGG subfamily.

It is found in the endoplasmic reticulum membrane. The protein operates within glycolipid biosynthesis; glycosylphosphatidylinositol-anchor biosynthesis. Ethanolamine phosphate transferase involved in glycosylphosphatidylinositol-anchor biosynthesis. Transfers ethanolamine phosphate to the GPI second mannose. The protein is GPI ethanolamine phosphate transferase 2 (las21) of Schizosaccharomyces pombe (strain 972 / ATCC 24843) (Fission yeast).